The following is an 89-amino-acid chain: Small ribosomal subunit protein bS16 (89 aa).

This sequence belongs to the bacterial ribosomal protein bS16 family.

The protein is Small ribosomal subunit protein bS16 of Chloroflexus aurantiacus (strain ATCC 29364 / DSM 637 / Y-400-fl).